A 113-amino-acid polypeptide reads, in one-letter code: MELPANVQNQLMQFQQLQQQLQMIMYQKQQFETQLKEMEKAIEEMEKSGSDEVFKMAGGILIKRNKAEVKEELSERVETLQLRVTTFEKQEEKMQKRYTELQENLQKAMGQGQ.

It belongs to the prefoldin subunit beta family. As to quaternary structure, heterohexamer of two alpha and four beta subunits.

It localises to the cytoplasm. Its function is as follows. Molecular chaperone capable of stabilizing a range of proteins. Seems to fulfill an ATP-independent, HSP70-like function in archaeal de novo protein folding. The sequence is that of Prefoldin subunit beta from Methanococcus maripaludis (strain C7 / ATCC BAA-1331).